Consider the following 473-residue polypeptide: Bifunctional protein HldE (473 aa).

Positions 1 to 318 (MKLTLPRYDQ…RAVQREEGSE (318 aa)) are ribokinase. 194 to 197 (NLHE) contributes to the ATP binding site. Asp-263 is an active-site residue. The cytidylyltransferase stretch occupies residues 343-473 (FTNGCFDILH…TAIVEKIRNK (131 aa)).

It in the N-terminal section; belongs to the carbohydrate kinase PfkB family. The protein in the C-terminal section; belongs to the cytidylyltransferase family. In terms of assembly, homodimer.

It carries out the reaction D-glycero-beta-D-manno-heptose 7-phosphate + ATP = D-glycero-beta-D-manno-heptose 1,7-bisphosphate + ADP + H(+). The enzyme catalyses D-glycero-beta-D-manno-heptose 1-phosphate + ATP + H(+) = ADP-D-glycero-beta-D-manno-heptose + diphosphate. The protein operates within nucleotide-sugar biosynthesis; ADP-L-glycero-beta-D-manno-heptose biosynthesis; ADP-L-glycero-beta-D-manno-heptose from D-glycero-beta-D-manno-heptose 7-phosphate: step 1/4. It functions in the pathway nucleotide-sugar biosynthesis; ADP-L-glycero-beta-D-manno-heptose biosynthesis; ADP-L-glycero-beta-D-manno-heptose from D-glycero-beta-D-manno-heptose 7-phosphate: step 3/4. Its function is as follows. Catalyzes the phosphorylation of D-glycero-D-manno-heptose 7-phosphate at the C-1 position to selectively form D-glycero-beta-D-manno-heptose-1,7-bisphosphate. Catalyzes the ADP transfer from ATP to D-glycero-beta-D-manno-heptose 1-phosphate, yielding ADP-D-glycero-beta-D-manno-heptose. The polypeptide is Bifunctional protein HldE (Ectopseudomonas mendocina (strain ymp) (Pseudomonas mendocina)).